Consider the following 159-residue polypeptide: 3-hydroxyacyl-[acyl-carrier-protein] dehydratase FabZ (159 aa).

Residue His58 is part of the active site.

This sequence belongs to the thioester dehydratase family. FabZ subfamily.

The protein resides in the cytoplasm. The catalysed reaction is a (3R)-hydroxyacyl-[ACP] = a (2E)-enoyl-[ACP] + H2O. Functionally, involved in unsaturated fatty acids biosynthesis. Catalyzes the dehydration of short chain beta-hydroxyacyl-ACPs and long chain saturated and unsaturated beta-hydroxyacyl-ACPs. The sequence is that of 3-hydroxyacyl-[acyl-carrier-protein] dehydratase FabZ from Helicobacter pylori (strain Shi470).